The following is a 412-amino-acid chain: GTPase Obg (412 aa).

Positions 1–159 (MKFLDQAKIF…RWIWLRLKMI (159 aa)) constitute an Obg domain. One can recognise an OBG-type G domain in the interval 160–327 (ADAGLVGLPN…ILARLFTHIR (168 aa)). GTP contacts are provided by residues 166–173 (GLPNAGKS), 191–195 (FTTLH), 212–215 (DIPG), 279–282 (NKCD), and 308–310 (SGV). Positions 173 and 193 each coordinate Mg(2+). The tract at residues 335–412 (AVPAASPIFG…ADDEEDDAEE (78 aa)) is disordered. Residues 385–412 (NDGDEVDEDYDDEDLEEVADDEEDDAEE) show a composition bias toward acidic residues.

The protein belongs to the TRAFAC class OBG-HflX-like GTPase superfamily. OBG GTPase family. Monomer. The cofactor is Mg(2+).

Its subcellular location is the cytoplasm. In terms of biological role, an essential GTPase which binds GTP, GDP and possibly (p)ppGpp with moderate affinity, with high nucleotide exchange rates and a fairly low GTP hydrolysis rate. Plays a role in control of the cell cycle, stress response, ribosome biogenesis and in those bacteria that undergo differentiation, in morphogenesis control. The chain is GTPase Obg from Paramagnetospirillum magneticum (strain ATCC 700264 / AMB-1) (Magnetospirillum magneticum).